A 145-amino-acid chain; its full sequence is Large ribosomal subunit protein uL11 (145 aa).

The protein belongs to the universal ribosomal protein uL11 family. In terms of assembly, part of the ribosomal stalk of the 50S ribosomal subunit. Interacts with L10 and the large rRNA to form the base of the stalk. L10 forms an elongated spine to which L12 dimers bind in a sequential fashion forming a multimeric L10(L12)X complex. Post-translationally, one or more lysine residues are methylated.

Functionally, forms part of the ribosomal stalk which helps the ribosome interact with GTP-bound translation factors. This is Large ribosomal subunit protein uL11 from Flavobacterium johnsoniae (strain ATCC 17061 / DSM 2064 / JCM 8514 / BCRC 14874 / CCUG 350202 / NBRC 14942 / NCIMB 11054 / UW101) (Cytophaga johnsonae).